The following is a 421-amino-acid chain: ATP-dependent RNA helicase RhlB (421 aa).

The Q motif motif lies at 9-37 (QKFSDFSLHPKVVEALEKKGFHNCTPIQA). In terms of domain architecture, Helicase ATP-binding spans 40–219 (LPLTLAGRDV…FEQMNNAEYI (180 aa)). An ATP-binding site is contributed by 53–60 (AQTGTGKT). Positions 165 to 168 (DEAD) match the DEAD box motif. The region spanning 245-390 (RLLQTLIEEE…VSKYNPDALM (146 aa)) is the Helicase C-terminal domain. The segment at 392-421 (DLPKPLRLTRPRTGNGPRRTGAPRNRRRSG) is disordered. The segment covering 402–414 (PRTGNGPRRTGAP) has biased composition (low complexity).

Belongs to the DEAD box helicase family. RhlB subfamily. In terms of assembly, component of the RNA degradosome, which is a multiprotein complex involved in RNA processing and mRNA degradation.

The protein localises to the cytoplasm. It carries out the reaction ATP + H2O = ADP + phosphate + H(+). Functionally, DEAD-box RNA helicase involved in RNA degradation. Has RNA-dependent ATPase activity and unwinds double-stranded RNA. This chain is ATP-dependent RNA helicase RhlB, found in Shigella dysenteriae serotype 1 (strain Sd197).